We begin with the raw amino-acid sequence, 1037 residues long: Glycine dehydrogenase (decarboxylating) A, mitochondrial (1037 aa).

The N-terminal 66 residues, 1–66 (MERARRLANK…LNGFGSQVRT (66 aa)), are a transit peptide targeting the mitochondrion. An N6-(pyridoxal phosphate)lysine modification is found at lysine 773.

The protein belongs to the GcvP family. Homodimer. The glycine cleavage system is composed of four proteins: P, T, L and H. The cofactor is pyridoxal 5'-phosphate. In terms of tissue distribution, expressed in leaves, stems and roots.

The protein resides in the mitochondrion. It carries out the reaction N(6)-[(R)-lipoyl]-L-lysyl-[glycine-cleavage complex H protein] + glycine + H(+) = N(6)-[(R)-S(8)-aminomethyldihydrolipoyl]-L-lysyl-[glycine-cleavage complex H protein] + CO2. Functionally, the glycine cleavage system catalyzes the degradation of glycine. The P protein binds the alpha-amino group of glycine through its pyridoxal phosphate cofactor; CO(2) is released and the remaining methylamine moiety is then transferred to the lipoamide cofactor of the H protein. This Flaveria pringlei protein is Glycine dehydrogenase (decarboxylating) A, mitochondrial (GDCSPA).